We begin with the raw amino-acid sequence, 61 residues long: Translational regulator CsrA (61 aa).

Belongs to the CsrA/RsmA family. As to quaternary structure, homodimer; the beta-strands of each monomer intercalate to form a hydrophobic core, while the alpha-helices form wings that extend away from the core.

It is found in the cytoplasm. Functionally, a key translational regulator that binds mRNA to regulate translation initiation and/or mRNA stability. Mediates global changes in gene expression, shifting from rapid growth to stress survival by linking envelope stress, the stringent response and the catabolite repression systems. Usually binds in the 5'-UTR; binding at or near the Shine-Dalgarno sequence prevents ribosome-binding, repressing translation, binding elsewhere in the 5'-UTR can activate translation and/or stabilize the mRNA. Its function is antagonized by small RNA(s). This is Translational regulator CsrA from Glaesserella parasuis serovar 5 (strain SH0165) (Haemophilus parasuis).